The chain runs to 111 residues: Resistin-like alpha (111 aa).

A signal peptide spans 1–23; sequence MKTTTCSLLICISLLQLMVPVNT. 5 disulfides stabilise this stretch: Cys-55-Cys-108, Cys-67-Cys-107, Cys-76-Cys-93, Cys-78-Cys-95, and Cys-82-Cys-97.

The protein belongs to the resistin/FIZZ family. In terms of assembly, monomer. Highest levels in adipose tissue.

The protein localises to the secreted. In terms of biological role, probable hormone. Plays a role in pulmonary vascular remodeling. This Mus musculus (Mouse) protein is Resistin-like alpha (Retnla).